Here is a 115-residue protein sequence, read N- to C-terminus: Large ribosomal subunit protein uL18 (115 aa).

It belongs to the universal ribosomal protein uL18 family. In terms of assembly, part of the 50S ribosomal subunit; part of the 5S rRNA/L5/L18/L25 subcomplex. Contacts the 5S and 23S rRNAs.

This is one of the proteins that bind and probably mediate the attachment of the 5S RNA into the large ribosomal subunit, where it forms part of the central protuberance. The protein is Large ribosomal subunit protein uL18 of Ruthia magnifica subsp. Calyptogena magnifica.